Here is a 124-residue protein sequence, read N- to C-terminus: Prefoldin subunit beta (124 aa).

Belongs to the prefoldin subunit beta family. In terms of assembly, heterohexamer of two alpha and four beta subunits.

Its subcellular location is the cytoplasm. In terms of biological role, molecular chaperone capable of stabilizing a range of proteins. Seems to fulfill an ATP-independent, HSP70-like function in archaeal de novo protein folding. In Thermoplasma acidophilum (strain ATCC 25905 / DSM 1728 / JCM 9062 / NBRC 15155 / AMRC-C165), this protein is Prefoldin subunit beta (pfdB).